Here is a 240-residue protein sequence, read N- to C-terminus: Oxygen-insensitive NADPH nitroreductase (240 aa).

FMN is bound by residues 11–15, S39, Q67, 128–131, and 167–169; these read HRSIR, YIGG, and KPR.

It belongs to the flavin oxidoreductase frp family. As to quaternary structure, homodimer. It depends on FMN as a cofactor.

In terms of biological role, catalyzes the reduction of nitroaromatic compounds using NADPH. Has a broad electron acceptor specificity. Reduces nitrofurazone by a ping-pong bi-bi mechanism possibly to generate a two-electron transfer product. The polypeptide is Oxygen-insensitive NADPH nitroreductase (nfsA) (Salmonella typhimurium (strain LT2 / SGSC1412 / ATCC 700720)).